We begin with the raw amino-acid sequence, 145 residues long: Large ribosomal subunit protein uL13 (145 aa).

The protein belongs to the universal ribosomal protein uL13 family. Part of the 50S ribosomal subunit.

Its function is as follows. This protein is one of the early assembly proteins of the 50S ribosomal subunit, although it is not seen to bind rRNA by itself. It is important during the early stages of 50S assembly. The chain is Large ribosomal subunit protein uL13 from Staphylococcus aureus (strain Mu3 / ATCC 700698).